We begin with the raw amino-acid sequence, 75 residues long: MNDNNDNNNNNKNIDNVDDDNDDNDKGKYKGNEFSILEKSLNKLLNNVETFKNYNNQMIESNNKTVDFVHSRFNK.

The segment covering 1 to 14 (MNDNNDNNNNNKNI) has biased composition (low complexity). The disordered stretch occupies residues 1–30 (MNDNNDNNNNNKNIDNVDDDNDDNDKGKYK).

This is an uncharacterized protein from Dictyostelium discoideum (Social amoeba).